The primary structure comprises 253 residues: Tryptophan synthase alpha chain (253 aa).

Catalysis depends on proton acceptor residues Glu-47 and Asp-58.

Belongs to the TrpA family. As to quaternary structure, tetramer of two alpha and two beta chains.

The enzyme catalyses (1S,2R)-1-C-(indol-3-yl)glycerol 3-phosphate + L-serine = D-glyceraldehyde 3-phosphate + L-tryptophan + H2O. The protein operates within amino-acid biosynthesis; L-tryptophan biosynthesis; L-tryptophan from chorismate: step 5/5. Functionally, the alpha subunit is responsible for the aldol cleavage of indoleglycerol phosphate to indole and glyceraldehyde 3-phosphate. The protein is Tryptophan synthase alpha chain of Desulforapulum autotrophicum (strain ATCC 43914 / DSM 3382 / VKM B-1955 / HRM2) (Desulfobacterium autotrophicum).